We begin with the raw amino-acid sequence, 196 residues long: uncharacterized protein (196 aa).

A helical membrane pass occupies residues 11–31 (ICGFLLVILTIGGVLGGVYLV).

The protein localises to the membrane. This is an uncharacterized protein from Mycoplasma genitalium (strain ATCC 33530 / DSM 19775 / NCTC 10195 / G37) (Mycoplasmoides genitalium).